A 318-amino-acid polypeptide reads, in one-letter code: Mitochondrial coenzyme A transporter SLC25A42 (318 aa).

Solcar repeat units follow at residues 31–117, 129–214, and 224–312; these read RQVL…YKRI, LPPW…LKSL, and PYPF…MQIL. Helical transmembrane passes span 33-53, 89-109, 135-155, 186-206, 230-250, and 293-313; these read VLSS…AVAP, LWRG…IQFS, LLAG…LDLV, LYFG…LSFF, MVFG…LDVV, and LKGP…QILL.

This sequence belongs to the mitochondrial carrier (TC 2.A.29) family. As to expression, widely expressed. Highly expressed in adipose, followed by hypothalamus and brain coronal sections containing corpus callosum, fornix, thalamus, hypothalamus, optic chiasm, pons, midbrain, and cerebellum.

It is found in the mitochondrion inner membrane. It carries out the reaction ADP(out) + CoA(in) = ADP(in) + CoA(out). The catalysed reaction is 3'-dephospho-CoA(in) + ADP(out) = 3'-dephospho-CoA(out) + ADP(in). It catalyses the reaction adenosine 3',5'-bisphosphate(in) + ADP(out) = adenosine 3',5'-bisphosphate(out) + ADP(in). The enzyme catalyses AMP(in) + ADP(out) = AMP(out) + ADP(in). It carries out the reaction dADP(in) + ADP(out) = dADP(out) + ADP(in). The catalysed reaction is ADP(in) + ATP(out) = ADP(out) + ATP(in). Functionally, mitochondrial carrier mediating the transport of coenzyme A (CoA) in mitochondria in exchange for intramitochondrial (deoxy)adenine nucleotides and adenosine 3',5'-diphosphate. This chain is Mitochondrial coenzyme A transporter SLC25A42 (Slc25a42), found in Rattus norvegicus (Rat).